We begin with the raw amino-acid sequence, 196 residues long: DNA replication complex GINS protein PSF1 (196 aa).

The protein belongs to the GINS1/PSF1 family. Component of the GINS complex which is a heterotetramer of GINS1, GINS2, GINS3 and GINS4. Forms a stable subcomplex with GINS4. GINS complex interacts with DNA primase in vitro. Component of the CMG helicase complex, a hexameric ring of related MCM2-7 subunits stabilized by CDC45 and the tetrameric GINS complex.

It is found in the nucleus. Its subcellular location is the chromosome. In terms of biological role, required for correct functioning of the GINS complex, a complex that plays an essential role in the initiation of DNA replication, and progression of DNA replication forks. GINS complex is a core component of CDC45-MCM-GINS (CMG) helicase, the molecular machine that unwinds template DNA during replication, and around which the replisome is built. This chain is DNA replication complex GINS protein PSF1 (Gins1), found in Mus musculus (Mouse).